The chain runs to 283 residues: tRNA pseudouridine synthase B (283 aa).

The Nucleophile role is filled by aspartate 38.

It belongs to the pseudouridine synthase TruB family. Type 1 subfamily.

The catalysed reaction is uridine(55) in tRNA = pseudouridine(55) in tRNA. Responsible for synthesis of pseudouridine from uracil-55 in the psi GC loop of transfer RNAs. This Aster yellows witches'-broom phytoplasma (strain AYWB) protein is tRNA pseudouridine synthase B.